The chain runs to 658 residues: Glycogen debranching enzyme (658 aa).

Catalysis depends on aspartate 336, which acts as the Nucleophile. Glutamate 371 acts as the Proton donor in catalysis. Residues 460 to 484 are disordered; sequence ANGEENRDGSNNNHSNNHGKEGLGG.

It belongs to the glycosyl hydrolase 13 family.

The enzyme catalyses Hydrolysis of (1-&gt;6)-alpha-D-glucosidic linkages to branches with degrees of polymerization of three or four glucose residues in limit dextrin.. It participates in glycan degradation; glycogen degradation. Removes maltotriose and maltotetraose chains that are attached by 1,6-alpha-linkage to the limit dextrin main chain, generating a debranched limit dextrin. This is Glycogen debranching enzyme from Escherichia fergusonii (strain ATCC 35469 / DSM 13698 / CCUG 18766 / IAM 14443 / JCM 21226 / LMG 7866 / NBRC 102419 / NCTC 12128 / CDC 0568-73).